The chain runs to 203 residues: RNA annealing protein YRA2 (203 aa).

Methionine 1 is modified (N-acetylmethionine). 2 disordered regions span residues methionine 1–proline 60 and glutamate 134–glycine 203. Polar residues predominate over residues asparagine 11–histidine 20. Over residues serine 47 to proline 60 the composition is skewed to basic and acidic residues. Residues lysine 64 to proline 138 form the RRM domain. Composition is skewed to basic residues over residues glutamine 139–glutamine 153 and proline 163–glycine 180.

The protein belongs to the YRA1 family. In terms of assembly, associates with mRNPs. Interacts with YRA1.

It localises to the nucleus. Functionally, involved in export of poly(A) mRNAs from the nucleus. Recruited to the coding sequences as well as poly-A sites of active genes. This chain is RNA annealing protein YRA2 (YRA2), found in Saccharomyces cerevisiae (strain RM11-1a) (Baker's yeast).